The following is a 323-amino-acid chain: MKRLNSQLQEDGAPMELILLLRTLLAGCKEISFRVSQGALAGVLGSTLSENVQGETQKKLDVISNQILKDILSESGYVKAISSEEEDDVVACNPNGNYLVSFDPLDGSSNTDINSLIGTIFSITHAPQWMDADDPSAFLQPGTQIVAAGYVLYGPSAMLALSTGRGTHLYTLDKTHGGFLLTQKNIQVPAQTSEFAINASNQRHWEDPVQNYIGDLIAGEDGPREKDFNMRWVAAMVGDIHRVLSRGGIFMYPFDRRNPEMPGKLRLLYEANPMAFLMEQAGGLASTGQGRILEVMPTEIHQRVPVILGSKEEVETCLSYYKA.

Mg(2+) contacts are provided by Glu-84, Asp-103, Leu-105, and Asp-106. Substrate-binding positions include 106–109, Asn-198, and Lys-264; that span reads DGSS. Glu-270 contacts Mg(2+).

It belongs to the FBPase class 1 family. As to quaternary structure, homotetramer. Mg(2+) serves as cofactor.

It localises to the cytoplasm. It carries out the reaction beta-D-fructose 1,6-bisphosphate + H2O = beta-D-fructose 6-phosphate + phosphate. It participates in carbohydrate biosynthesis; gluconeogenesis. The chain is Fructose-1,6-bisphosphatase class 1 from Pseudoalteromonas atlantica (strain T6c / ATCC BAA-1087).